The following is a 734-amino-acid chain: Serine protease FAM111B (734 aa).

Residue methionine 1 is modified to N-acetylmethionine. 2 stretches are compositionally biased toward basic and acidic residues: residues 1–10 and 17–32; these read MNSMKTEENK and DDQR…TVMK. The interval 1 to 32 is disordered; it reads MNSMKTEENKSFSAMEDDQRTRPEVSKDTVMK. Residue lysine 284 forms a Glycyl lysine isopeptide (Lys-Gly) (interchain with G-Cter in SUMO2) linkage. The segment at 285 to 321 is disordered; sequence QNESATDEINHQSLIQSKKKVHKPKKDGETKDVEHSR. Over residues 310–321 the composition is skewed to basic and acidic residues; that stretch reads KDGETKDVEHSR. Catalysis depends on charge relay system residues histidine 490, aspartate 544, and serine 650. A disordered region spans residues 712–734; it reads TYDEEKGKQESSLQDHQIEPMEC.

The protein belongs to the FAM111 family. Widely expressed.

Functionally, serine protease. This chain is Serine protease FAM111B, found in Homo sapiens (Human).